We begin with the raw amino-acid sequence, 265 residues long: ATP synthase subunit a (265 aa).

6 helical membrane passes run 26–46 (VHLDTLFFSLVSGVLFLFFFY), 88–108 (IGSLALTIFCWVFVMNAIDLI), 132–152 (DISATLGMSVCVFALIIFYTI), 168–188 (PFNHWAFIPVNFLLEAVTLLA), 195–217 (FRLFGNMYAGELIFVLIAVMYMA), and 231–251 (LIWAIFHILVITLQAFIFMML).

This sequence belongs to the ATPase A chain family. F-type ATPases have 2 components, CF(1) - the catalytic core - and CF(0) - the membrane proton channel. CF(1) has five subunits: alpha(3), beta(3), gamma(1), delta(1), epsilon(1). CF(0) has three main subunits: a(1), b(2) and c(9-12). The alpha and beta chains form an alternating ring which encloses part of the gamma chain. CF(1) is attached to CF(0) by a central stalk formed by the gamma and epsilon chains, while a peripheral stalk is formed by the delta and b chains.

The protein resides in the cell inner membrane. In terms of biological role, key component of the proton channel; it plays a direct role in the translocation of protons across the membrane. This chain is ATP synthase subunit a, found in Histophilus somni (strain 129Pt) (Haemophilus somnus).